Here is a 127-residue protein sequence, read N- to C-terminus: Glycine cleavage system H protein 1 (127 aa).

Residues 20 to 101 (SVTVGITAYA…MGEGWFFRFI (82 aa)) enclose the Lipoyl-binding domain. An N6-lipoyllysine modification is found at Lys-60.

It belongs to the GcvH family. In terms of assembly, the glycine cleavage system is composed of four proteins: P, T, L and H. Requires (R)-lipoate as cofactor.

The glycine cleavage system catalyzes the degradation of glycine. The H protein shuttles the methylamine group of glycine from the P protein to the T protein. This chain is Glycine cleavage system H protein 1, found in Pseudomonas putida (strain ATCC 47054 / DSM 6125 / CFBP 8728 / NCIMB 11950 / KT2440).